The primary structure comprises 158 residues: Protein NrdI (158 aa).

This sequence belongs to the NrdI family.

In terms of biological role, probably involved in ribonucleotide reductase function. The protein is Protein NrdI of Rhodococcus jostii (strain RHA1).